A 118-amino-acid polypeptide reads, in one-letter code: NADH-ubiquinone oxidoreductase chain 3 (118 aa).

3 consecutive transmembrane segments (helical) span residues 6–26 (IFVY…VSFL), 62–82 (LVSI…PWAV), and 87–107 (IGLF…IGFV).

The protein belongs to the complex I subunit 3 family.

The protein resides in the mitochondrion membrane. It catalyses the reaction a ubiquinone + NADH + 5 H(+)(in) = a ubiquinol + NAD(+) + 4 H(+)(out). In terms of biological role, core subunit of the mitochondrial membrane respiratory chain NADH dehydrogenase (Complex I) that is believed to belong to the minimal assembly required for catalysis. Complex I functions in the transfer of electrons from NADH to the respiratory chain. The immediate electron acceptor for the enzyme is believed to be ubiquinone. In Marchantia polymorpha (Common liverwort), this protein is NADH-ubiquinone oxidoreductase chain 3 (ND3).